Here is a 391-residue protein sequence, read N- to C-terminus: 3-ketoacyl-CoA thiolase (391 aa).

Cys95 (acyl-thioester intermediate) is an active-site residue. Residues His347 and Cys377 each act as proton acceptor in the active site.

This sequence belongs to the thiolase-like superfamily. Thiolase family. Heterotetramer of two alpha chains (FadB) and two beta chains (FadA).

It is found in the cytoplasm. The catalysed reaction is an acyl-CoA + acetyl-CoA = a 3-oxoacyl-CoA + CoA. Its pathway is lipid metabolism; fatty acid beta-oxidation. Its function is as follows. Catalyzes the final step of fatty acid oxidation in which acetyl-CoA is released and the CoA ester of a fatty acid two carbons shorter is formed. The protein is 3-ketoacyl-CoA thiolase of Hahella chejuensis (strain KCTC 2396).